We begin with the raw amino-acid sequence, 87 residues long: uncharacterized protein (87 aa).

Belongs to the SF3B5 family.

This is an uncharacterized protein from Arabidopsis thaliana (Mouse-ear cress).